The chain runs to 123 residues: Fluoride-specific ion channel FluC 1 (123 aa).

Helical transmembrane passes span 33 to 53, 59 to 79, and 98 to 118; these read TFLINISGAFVIGYLSVLFGV, YGTMLNAGVLTGILGGYTTFS, and VFYLVASVLSGLFAAWLGAML. Residues glycine 73 and threonine 76 each coordinate Na(+).

This sequence belongs to the fluoride channel Fluc/FEX (TC 1.A.43) family.

The protein resides in the cell inner membrane. It carries out the reaction fluoride(in) = fluoride(out). Its activity is regulated as follows. Na(+) is not transported, but it plays an essential structural role and its presence is essential for fluoride channel function. Its function is as follows. Fluoride-specific ion channel. Important for reducing fluoride concentration in the cell, thus reducing its toxicity. The polypeptide is Fluoride-specific ion channel FluC 1 (Brucella melitensis biotype 1 (strain ATCC 23456 / CCUG 17765 / NCTC 10094 / 16M)).